The following is a 248-amino-acid chain: Probable aquaporin TIP2-2 (248 aa).

2 helical membrane passes run Ala-21–Ile-41 and Ala-55–Gly-75. The NPA 1 signature appears at Asn-84 to Ala-86. Helical transmembrane passes span Val-87–Gln-109, Leu-133–Val-153, and Leu-168–Gly-188. Residues Asn-196–Ala-198 carry the NPA 2 motif. A helical transmembrane segment spans residues Tyr-210–Val-230.

The protein belongs to the MIP/aquaporin (TC 1.A.8) family. TIP (TC 1.A.8.10) subfamily. As to expression, expressed in roots and leaves.

The protein resides in the vacuole membrane. In terms of biological role, aquaporins facilitate the transport of water and small neutral solutes across cell membranes. May be involved in transport from the vacuolar compartment to the cytoplasm. This Oryza sativa subsp. japonica (Rice) protein is Probable aquaporin TIP2-2 (TIP2-2).